We begin with the raw amino-acid sequence, 361 residues long: 3-dehydroquinate synthase (361 aa).

This sequence belongs to the archaeal-type DHQ synthase family.

It catalyses the reaction 2-amino-2,3,7-trideoxy-D-lyxo-hept-6-ulosonate + NAD(+) + H2O = 3-dehydroquinate + NH4(+) + NADH + H(+). Its function is as follows. Catalyzes the oxidative deamination and cyclization of 2-amino-3,7-dideoxy-D-threo-hept-6-ulosonic acid (ADH) to yield 3-dehydroquinate (DHQ), which is fed into the canonical shikimic pathway of aromatic amino acid biosynthesis. In Methanococcus maripaludis (strain C6 / ATCC BAA-1332), this protein is 3-dehydroquinate synthase.